A 224-amino-acid chain; its full sequence is DNA mismatch repair protein MutH (224 aa).

The protein belongs to the MutH family.

Its subcellular location is the cytoplasm. Functionally, sequence-specific endonuclease that cleaves unmethylated GATC sequences. It is involved in DNA mismatch repair. The sequence is that of DNA mismatch repair protein MutH from Histophilus somni (strain 2336) (Haemophilus somnus).